We begin with the raw amino-acid sequence, 221 residues long: UPF0758 protein KPN78578_39390 (221 aa).

In terms of domain architecture, MPN spans 99–221 (ALVTPSMTRE…YVSFAERGWI (123 aa)). Residues His170, His172, and Asp183 each contribute to the Zn(2+) site. The JAMM motif motif lies at 170–183 (HNHPSGSPEPSQAD).

The protein belongs to the UPF0758 family. YicR subfamily.

This Klebsiella pneumoniae subsp. pneumoniae (strain ATCC 700721 / MGH 78578) protein is UPF0758 protein KPN78578_39390.